Consider the following 549-residue polypeptide: Glucose-6-phosphate isomerase (549 aa).

E353 serves as the catalytic Proton donor. Active-site residues include H384 and K513.

Belongs to the GPI family.

The protein localises to the cytoplasm. The catalysed reaction is alpha-D-glucose 6-phosphate = beta-D-fructose 6-phosphate. It functions in the pathway carbohydrate biosynthesis; gluconeogenesis. The protein operates within carbohydrate degradation; glycolysis; D-glyceraldehyde 3-phosphate and glycerone phosphate from D-glucose: step 2/4. Its function is as follows. Catalyzes the reversible isomerization of glucose-6-phosphate to fructose-6-phosphate. The chain is Glucose-6-phosphate isomerase from Brucella anthropi (strain ATCC 49188 / DSM 6882 / CCUG 24695 / JCM 21032 / LMG 3331 / NBRC 15819 / NCTC 12168 / Alc 37) (Ochrobactrum anthropi).